The primary structure comprises 640 residues: Threonine--tRNA ligase (640 aa).

One can recognise a TGS domain in the interval 1–61 (MPVITLPDGS…SNDATLQIIT (61 aa)). Residues 242 to 533 (DHRKIGKQLD…LIEHYAGVFP (292 aa)) are catalytic. Zn(2+) contacts are provided by cysteine 333, histidine 384, and histidine 510.

It belongs to the class-II aminoacyl-tRNA synthetase family. In terms of assembly, homodimer. Zn(2+) is required as a cofactor.

Its subcellular location is the cytoplasm. It carries out the reaction tRNA(Thr) + L-threonine + ATP = L-threonyl-tRNA(Thr) + AMP + diphosphate + H(+). Functionally, catalyzes the attachment of threonine to tRNA(Thr) in a two-step reaction: L-threonine is first activated by ATP to form Thr-AMP and then transferred to the acceptor end of tRNA(Thr). Also edits incorrectly charged L-seryl-tRNA(Thr). This chain is Threonine--tRNA ligase, found in Pseudomonas putida (strain ATCC 700007 / DSM 6899 / JCM 31910 / BCRC 17059 / LMG 24140 / F1).